A 308-amino-acid polypeptide reads, in one-letter code: Methionyl-tRNA formyltransferase (308 aa).

Residue 110 to 113 (SLLP) participates in (6S)-5,6,7,8-tetrahydrofolate binding.

This sequence belongs to the Fmt family.

It catalyses the reaction L-methionyl-tRNA(fMet) + (6R)-10-formyltetrahydrofolate = N-formyl-L-methionyl-tRNA(fMet) + (6S)-5,6,7,8-tetrahydrofolate + H(+). Its function is as follows. Attaches a formyl group to the free amino group of methionyl-tRNA(fMet). The formyl group appears to play a dual role in the initiator identity of N-formylmethionyl-tRNA by promoting its recognition by IF2 and preventing the misappropriation of this tRNA by the elongation apparatus. In Neisseria meningitidis serogroup B (strain ATCC BAA-335 / MC58), this protein is Methionyl-tRNA formyltransferase.